The chain runs to 946 residues: Inter-alpha-trypsin inhibitor heavy chain H2 (946 aa).

A signal peptide spans Met1–Ala18. Positions Phe19–Arg54 are excised as a propeptide. A VIT domain is found at Leu56 to Glu185. Ser60 carries the phosphoserine modification. 2 N-linked (GlcNAc...) asparagine glycosylation sites follow: Asn118 and Asn263. 4-carboxyglutamate occurs at positions 282 and 283. Residues Pro308–Glu468 form the VWFA domain. Asn445 carries an N-linked (GlcNAc...) asparagine glycan. The residue at position 466 (Ser466) is a Phosphoserine. Asp702 is modified (aspartate 1-(chondroitin 4-sulfate)-ester). The propeptide occupies Pro703–Pro946. Ser886 carries the post-translational modification Phosphoserine.

Belongs to the ITIH family. In terms of assembly, I-alpha-I plasma protease inhibitors are assembled from one or two heavy chains (HC) and one light chain, bikunin. Inter-alpha-inhibitor (I-alpha-I) is composed of ITIH1/HC1, ITIH2/HC2 and bikunin. In terms of processing, heavy chains are linked to bikunin via chondroitin 4-sulfate esterified to the alpha-carboxyl of the C-terminal aspartate after propeptide cleavage. Phosphorylated by FAM20C in the extracellular medium. As to expression, expressed in both liver and brain.

It is found in the secreted. Its function is as follows. May act as a carrier of hyaluronan in serum or as a binding protein between hyaluronan and other matrix protein, including those on cell surfaces in tissues to regulate the localization, synthesis and degradation of hyaluronan which are essential to cells undergoing biological processes. The protein is Inter-alpha-trypsin inhibitor heavy chain H2 (Itih2) of Mus musculus (Mouse).